Here is a 92-residue protein sequence, read N- to C-terminus: Small ribosomal subunit protein uS19 (92 aa).

The protein belongs to the universal ribosomal protein uS19 family.

In terms of biological role, protein S19 forms a complex with S13 that binds strongly to the 16S ribosomal RNA. The protein is Small ribosomal subunit protein uS19 of Magnetococcus marinus (strain ATCC BAA-1437 / JCM 17883 / MC-1).